The following is a 79-amino-acid chain: Large ribosomal subunit protein uL29 (79 aa).

The protein belongs to the universal ribosomal protein uL29 family.

In Nocardia farcinica (strain IFM 10152), this protein is Large ribosomal subunit protein uL29.